Reading from the N-terminus, the 189-residue chain is Protein GrpE (189 aa).

Residues 1 to 31 (MSKKHMKGNGGEVPENSEMSGSEELVAVEPG) form a disordered region.

This sequence belongs to the GrpE family. In terms of assembly, homodimer.

It localises to the cytoplasm. Participates actively in the response to hyperosmotic and heat shock by preventing the aggregation of stress-denatured proteins, in association with DnaK and GrpE. It is the nucleotide exchange factor for DnaK and may function as a thermosensor. Unfolded proteins bind initially to DnaJ; upon interaction with the DnaJ-bound protein, DnaK hydrolyzes its bound ATP, resulting in the formation of a stable complex. GrpE releases ADP from DnaK; ATP binding to DnaK triggers the release of the substrate protein, thus completing the reaction cycle. Several rounds of ATP-dependent interactions between DnaJ, DnaK and GrpE are required for fully efficient folding. In Syntrophobacter fumaroxidans (strain DSM 10017 / MPOB), this protein is Protein GrpE.